We begin with the raw amino-acid sequence, 261 residues long: Probable trans-aconitate 2-methyltransferase (261 aa).

Belongs to the methyltransferase superfamily. Tam family.

It is found in the cytoplasm. The enzyme catalyses trans-aconitate + S-adenosyl-L-methionine = (E)-3-(methoxycarbonyl)pent-2-enedioate + S-adenosyl-L-homocysteine. In terms of biological role, catalyzes the S-adenosylmethionine monomethyl esterification of trans-aconitate. This is Probable trans-aconitate 2-methyltransferase from Mycobacterium bovis (strain ATCC BAA-935 / AF2122/97).